Reading from the N-terminus, the 138-residue chain is MHVSKKEIEVRYAETDQMGIVYHANYLVWMEVGRTALIKDLGFLYSDMEKKGVLSPVVDINISYKKPLHYGETAVVHTWIEDYNGFKTVYGYHIYNPAGELSIKATSSHICVDKESFKPIQFRKAFPDWHTAYEKAKK.

Asp-16 is a catalytic residue.

Belongs to the 4-hydroxybenzoyl-CoA thioesterase family.

Has acyl-CoA thioesterase activity. In Bacillus subtilis (strain 168), this protein is Putative acyl-CoA thioesterase YneP (yneP).